The primary structure comprises 77 residues: MAVFDEVKDVVVEQLSVAPDAVKMESKIIEDLGADSLDVVELVMALEEKFEVEIPDSEAEKLISISDVVNYIDGLKK.

Positions 1-76 constitute a Carrier domain; that stretch reads MAVFDEVKDV…DVVNYIDGLK (76 aa). Position 36 is an O-(pantetheine 4'-phosphoryl)serine (Ser36).

The protein belongs to the acyl carrier protein (ACP) family. 4'-phosphopantetheine is transferred from CoA to a specific serine of apo-ACP by AcpS. This modification is essential for activity because fatty acids are bound in thioester linkage to the sulfhydryl of the prosthetic group.

It localises to the cytoplasm. It participates in lipid metabolism; fatty acid biosynthesis. Functionally, carrier of the growing fatty acid chain in fatty acid biosynthesis. In Campylobacter fetus subsp. fetus (strain 82-40), this protein is Acyl carrier protein.